Here is a 156-residue protein sequence, read N- to C-terminus: Superoxide dismutase [Cu-Zn] 2 (156 aa).

Residues H47, H49, and H64 each coordinate Cu cation. Cysteines 58 and 147 form a disulfide. Residues H64, H72, H81, and D84 each coordinate Zn(2+). H121 contributes to the Cu cation binding site.

Belongs to the Cu-Zn superoxide dismutase family. In terms of assembly, homodimer. Cu cation serves as cofactor. Zn(2+) is required as a cofactor.

Its subcellular location is the cytoplasm. The catalysed reaction is 2 superoxide + 2 H(+) = H2O2 + O2. Functionally, destroys radicals which are normally produced within the cells and which are toxic to biological systems. This Mesembryanthemum crystallinum (Common ice plant) protein is Superoxide dismutase [Cu-Zn] 2 (SODCC.2).